Consider the following 388-residue polypeptide: NADH-quinone oxidoreductase subunit D 2 (388 aa).

Belongs to the complex I 49 kDa subunit family. NDH-1 is composed of 14 different subunits. Subunits NuoB, C, D, E, F, and G constitute the peripheral sector of the complex.

The protein localises to the cell membrane. It catalyses the reaction a quinone + NADH + 5 H(+)(in) = a quinol + NAD(+) + 4 H(+)(out). Its function is as follows. NDH-1 shuttles electrons from NADH, via FMN and iron-sulfur (Fe-S) centers, to quinones in the respiratory chain. The immediate electron acceptor for the enzyme in this species is believed to be a menaquinone. Couples the redox reaction to proton translocation (for every two electrons transferred, four hydrogen ions are translocated across the cytoplasmic membrane), and thus conserves the redox energy in a proton gradient. The protein is NADH-quinone oxidoreductase subunit D 2 of Salinispora tropica (strain ATCC BAA-916 / DSM 44818 / JCM 13857 / NBRC 105044 / CNB-440).